The chain runs to 206 residues: Small ribosomal subunit protein uS4 (206 aa).

Positions 96-156 constitute an S4 RNA-binding domain; it reads GRLDNVVYRM…EKSKKQARIK (61 aa).

It belongs to the universal ribosomal protein uS4 family. In terms of assembly, part of the 30S ribosomal subunit. Contacts protein S5. The interaction surface between S4 and S5 is involved in control of translational fidelity.

Functionally, one of the primary rRNA binding proteins, it binds directly to 16S rRNA where it nucleates assembly of the body of the 30S subunit. In terms of biological role, with S5 and S12 plays an important role in translational accuracy. The protein is Small ribosomal subunit protein uS4 of Mannheimia succiniciproducens (strain KCTC 0769BP / MBEL55E).